The chain runs to 481 residues: Ribosomal protein uS12 methylthiotransferase RimO (481 aa).

The region spanning asparagine 38–proline 148 is the MTTase N-terminal domain. [4Fe-4S] cluster-binding residues include cysteine 47, cysteine 83, cysteine 112, cysteine 180, cysteine 184, and cysteine 187. In terms of domain architecture, Radical SAM core spans leucine 166–glutamate 403. The TRAM domain occupies alanine 406–aspartate 472.

The protein belongs to the methylthiotransferase family. RimO subfamily. It depends on [4Fe-4S] cluster as a cofactor.

The protein resides in the cytoplasm. It carries out the reaction L-aspartate(89)-[ribosomal protein uS12]-hydrogen + (sulfur carrier)-SH + AH2 + 2 S-adenosyl-L-methionine = 3-methylsulfanyl-L-aspartate(89)-[ribosomal protein uS12]-hydrogen + (sulfur carrier)-H + 5'-deoxyadenosine + L-methionine + A + S-adenosyl-L-homocysteine + 2 H(+). In terms of biological role, catalyzes the methylthiolation of an aspartic acid residue of ribosomal protein uS12. This Shewanella oneidensis (strain ATCC 700550 / JCM 31522 / CIP 106686 / LMG 19005 / NCIMB 14063 / MR-1) protein is Ribosomal protein uS12 methylthiotransferase RimO.